A 403-amino-acid polypeptide reads, in one-letter code: Endophilin-B2 (403 aa).

The membrane-binding amphipathic helix stretch occupies residues 1-27 (MDFNVKKLASDAGVFFSRAMQFTEEKL). The region spanning 24 to 287 (EEKLGQAEKT…LGRFSGTFVG (264 aa)) is the BAR domain. A coiled-coil region spans residues 210-233 (WSDEVEKAEHELRLTQTEFDRQAE). Positions 343 to 403 (SGTRKARVLY…VPVTYLELLS (61 aa)) constitute an SH3 domain.

It belongs to the endophilin family. As to quaternary structure, homodimer, and heterodimer with SH3GLB1.

It localises to the cytoplasm. The sequence is that of Endophilin-B2 from Gallus gallus (Chicken).